The chain runs to 202 residues: Cytochrome c oxidase assembly protein CtaG (202 aa).

The Cytoplasmic portion of the chain corresponds to 1–14 (MTSPANPSEVTRDR). A helical; Signal-anchor for type II membrane protein transmembrane segment spans residues 15–37 (RNRGVAFVCAGVFVAMVGMSFAA). At 38–202 (VPLYRLFCQV…GAAKTQKLGG (165 aa)) the chain is on the periplasmic side.

It belongs to the COX11/CtaG family.

It is found in the cell inner membrane. In terms of biological role, exerts its effect at some terminal stage of cytochrome c oxidase synthesis, probably by being involved in the insertion of the copper B into subunit I. The sequence is that of Cytochrome c oxidase assembly protein CtaG from Chelativorans sp. (strain BNC1).